The primary structure comprises 236 residues: Uridylate kinase (236 aa).

10 to 13 is an ATP binding site; it reads KLSG. Glycine 52 contributes to the UMP binding site. Positions 53 and 57 each coordinate ATP. UMP is bound by residues aspartate 72 and 133–140; that span reads TGNPFFTT. Threonine 160, tyrosine 166, and aspartate 169 together coordinate ATP.

It belongs to the UMP kinase family. In terms of assembly, homohexamer.

Its subcellular location is the cytoplasm. It catalyses the reaction UMP + ATP = UDP + ADP. Its pathway is pyrimidine metabolism; CTP biosynthesis via de novo pathway; UDP from UMP (UMPK route): step 1/1. With respect to regulation, inhibited by UTP. Its function is as follows. Catalyzes the reversible phosphorylation of UMP to UDP. This Ralstonia nicotianae (strain ATCC BAA-1114 / GMI1000) (Ralstonia solanacearum) protein is Uridylate kinase.